A 728-amino-acid chain; its full sequence is Catalase B (728 aa).

Positions 1–15 (MRLTFIPSLIGVANA) are cleaved as a signal peptide. The propeptide occupies 16–27 (VCPYMTGELNRR). The active site involves H102. N-linked (GlcNAc...) asparagine glycosylation is present at N120. Residue N175 is part of the active site. Position 389 (Y389) interacts with heme. N-linked (GlcNAc...) asparagine glycans are attached at residues N448 and N551.

The protein belongs to the catalase family. In terms of assembly, homotetramer. Heme is required as a cofactor. In terms of processing, N-glycosylated.

It localises to the secreted. It carries out the reaction 2 H2O2 = O2 + 2 H2O. In terms of biological role, occurs in almost all aerobically respiring organisms and serves to protect cells from the toxic effects of hydrogen peroxide. The chain is Catalase B (catB) from Aspergillus fumigatus (strain ATCC MYA-4609 / CBS 101355 / FGSC A1100 / Af293) (Neosartorya fumigata).